Here is a 397-residue protein sequence, read N- to C-terminus: S-adenosylmethionine synthase (397 aa).

Histidine 17 serves as a coordination point for ATP. Aspartate 19 serves as a coordination point for Mg(2+). Position 45 (glutamate 45) interacts with K(+). The L-methionine site is built by glutamate 58 and glutamine 101. Residues 101–111 (QSPDIAQGVDK) are flexible loop. ATP contacts are provided by residues 176 to 178 (DGK), 243 to 244 (RF), aspartate 252, 258 to 259 (RK), and lysine 279. Aspartate 252 serves as a coordination point for L-methionine. Lysine 283 serves as a coordination point for L-methionine.

It belongs to the AdoMet synthase family. In terms of assembly, homotetramer; dimer of dimers. It depends on Mg(2+) as a cofactor. K(+) is required as a cofactor.

The protein resides in the cytoplasm. The catalysed reaction is L-methionine + ATP + H2O = S-adenosyl-L-methionine + phosphate + diphosphate. Its pathway is amino-acid biosynthesis; S-adenosyl-L-methionine biosynthesis; S-adenosyl-L-methionine from L-methionine: step 1/1. Its function is as follows. Catalyzes the formation of S-adenosylmethionine (AdoMet) from methionine and ATP. The overall synthetic reaction is composed of two sequential steps, AdoMet formation and the subsequent tripolyphosphate hydrolysis which occurs prior to release of AdoMet from the enzyme. This chain is S-adenosylmethionine synthase, found in Staphylococcus aureus (strain MRSA252).